The chain runs to 336 residues: Potassium channel subfamily K member 1 (336 aa).

At 1-20 (MLQSLAGSSCVRLVERHRSA) the chain is on the cytoplasmic side. Residues 21–41 (WCFGFLVLGYLLYLVFGAVVF) traverse the membrane as a helical segment. Topologically, residues 42–103 (SSVELPYEDL…SNASGNWNWD (62 aa)) are extracellular. Asn-95 carries N-linked (GlcNAc...) asparagine glycosylation. Residues 104–116 (FTSALFFASTVLS) constitute an intramembrane region (helical). Residues 117–122 (TTGYGH) lie within the membrane without spanning it. The interval 117 to 122 (TTGYGH) is selectivity filter 1. The Extracellular portion of the chain corresponds to 123–132 (TVPLSDGGKA). Residues 133–156 (FCIIYSVIGIPFTLLFLTAVVQRV) traverse the membrane as a helical segment. Residues 157 to 181 (TIHVTRRPVLYFHVRWGFSKQAVAI) lie on the Cytoplasmic side of the membrane. Residues 182 to 202 (VHAVLLGVVTVSCFFFIPAAV) traverse the membrane as a helical segment. The Extracellular portion of the chain corresponds to 203 to 211 (FSVLEDDWN). An intramembrane region (helical) is located at residues 212-224 (FLESFYFCFISLS). Residues 225 to 230 (TIGLGD) form a selectivity filter 2 region. The stretch at 225–231 (TIGLGDY) is an intramembrane region. Residues 232 to 243 (VPGEGYNQKFRE) lie on the Extracellular side of the membrane. The chain crosses the membrane as a helical span at residues 244–267 (LYKIGITCYLLLGLIAMLVVLETF). Residues 268-336 (CELHELKKFR…PALADGASDH (69 aa)) lie on the Cytoplasmic side of the membrane. Lys-274 participates in a covalent cross-link: Glycyl lysine isopeptide (Lys-Gly) (interchain with G-Cter in SUMO). Residues 293–299 (IIEHDQL) are important for intracellular retention in recycling endosomes. The tract at residues 307-336 (QAAGVQEDQKQNEPFVSPQPPALADGASDH) is disordered.

Belongs to the two pore domain potassium channel (TC 1.A.1.8) family. As to quaternary structure, homodimer; disulfide-linked. Heterodimer with KCNK2; disulfide-linked. In astrocytes, forms mostly heterodimeric potassium channels with KCNK2, with only a minor proportion of functional channels containing homodimeric KCNK1. Interacts with KCNK3 and KCNK9, forming functional heterodimeric channels. Interacts with GNG4. Identified in a complex with PSD and ARF6; interacts only with PSD that is bound to ARF6. Interacts with UBE2I. In terms of processing, sumoylation is controversial. Sumoylated by UBE2I. Not sumoylated when expressed in xenopus oocytes or mammalian cells. Sumoylation inactivates the channel, but does not interfere with expression at the cell membrane. Sumoylation of a single subunit is sufficient to silence the dimeric channel. Sumoylation of KCNK1 is sufficient to silence heterodimeric channels formed by KCNK1 and KCNK3 or KCNK9. Desumoylated by SENP1; this activates the channel. Desumoylated by SENP1; this strongly increases halothane-mediated activation of heterodimeric channels formed with KCNK9. SENP1 treatment has no effect.

It localises to the cell membrane. The protein localises to the recycling endosome. The protein resides in the synaptic cell membrane. Its subcellular location is the cytoplasmic vesicle. It is found in the perikaryon. It localises to the cell projection. The protein localises to the dendrite. The protein resides in the apical cell membrane. The enzyme catalyses K(+)(in) = K(+)(out). The catalysed reaction is NH4(+)(in) = NH4(+)(out). It catalyses the reaction Na(+)(in) = Na(+)(out). It carries out the reaction Rb(+)(in) = Rb(+)(out). The enzyme catalyses Cs(+)(in) = Cs(+)(out). The catalysed reaction is Li(+)(in) = Li(+)(out). It catalyses the reaction L-glutamate(out) = L-glutamate(in). It carries out the reaction chloride(in) = chloride(out). Functionally, ion channel that contributes to passive transmembrane potassium transport and to the regulation of the resting membrane potential in brain astrocytes, but also in kidney and in other tissues. Forms dimeric channels through which potassium ions pass in accordance with their electrochemical gradient. The channel is selective for K(+) ions at physiological potassium concentrations and at neutral pH, but becomes permeable to Na(+) at subphysiological K(+) levels and upon acidification of the extracellular medium. The homodimer has very low potassium channel activity, when expressed in heterologous systems, and can function as weakly inward rectifying potassium channel. Channel activity is modulated by activation of serotonin receptors. Heterodimeric channels containing KCNK1 and KCNK2 have much higher activity, and may represent the predominant form in astrocytes. Heterodimeric channels containing KCNK1 and KCNK3 or KCNK9 have much higher activity. Heterodimeric channels formed by KCNK1 and KCNK9 may contribute to halothane-sensitive currents. Mediates outward rectifying potassium currents in dentate gyrus granule cells and contributes to the regulation of their resting membrane potential. Contributes to the regulation of action potential firing in dentate gyrus granule cells and down-regulates their intrinsic excitability. In astrocytes, the heterodimer formed by KCNK1 and KCNK2 is required for rapid glutamate release in response to activation of G-protein coupled receptors, such as F2R and CNR1. Required for normal ion and water transport in the kidney. Contributes to the regulation of the resting membrane potential of pancreatic beta cells. The low channel activity of homodimeric KCNK1 may be due to sumoylation. The low channel activity may be due to rapid internalization from the cell membrane and retention in recycling endosomes. Permeable to monovalent cations with ion selectivity for K(+) &gt; Rb(+) &gt;&gt; NH4(+) &gt;&gt; Cs(+) = Na(+) = Li(+). This Bos taurus (Bovine) protein is Potassium channel subfamily K member 1.